Consider the following 310-residue polypeptide: Mitochondrial thiamine pyrophosphate carrier 1 (310 aa).

The next 6 helical transmembrane spans lie at 16–32, 88–104, 117–141, 173–197, 218–234, and 274–291; these read VSPYESLFAGSVSGGVA, ILYVMYGAVQFTTYSAL, IVMPSSVHSLLAGVGAGIASTLTTY, GISGLFAGIRPAMISVASTTGLMFW, ICGFVAGATSKGITFPL, and GYGVSILKTAPTSAISLW. Solcar repeat units lie at residues 16–107, 120–205, and 211–299; these read VSPY…LSKS, PSSV…AREF, and HVPF…VISA.

This sequence belongs to the mitochondrial carrier (TC 2.A.29) family.

Its subcellular location is the mitochondrion inner membrane. In terms of biological role, mitochondrial transporter that mediates uptake of thiamine pyrophosphate (ThPP) into mitochondria. The protein is Mitochondrial thiamine pyrophosphate carrier 1 (TPC1) of Lodderomyces elongisporus (strain ATCC 11503 / CBS 2605 / JCM 1781 / NBRC 1676 / NRRL YB-4239) (Yeast).